A 310-amino-acid chain; its full sequence is tRNA-cytidine(32) 2-sulfurtransferase (310 aa).

Residues 48 to 53 (SGGKDS) carry the PP-loop motif motif. 3 residues coordinate [4Fe-4S] cluster: Cys-123, Cys-126, and Cys-214.

Belongs to the TtcA family. Homodimer. The cofactor is Mg(2+). Requires [4Fe-4S] cluster as cofactor.

It is found in the cytoplasm. It catalyses the reaction cytidine(32) in tRNA + S-sulfanyl-L-cysteinyl-[cysteine desulfurase] + AH2 + ATP = 2-thiocytidine(32) in tRNA + L-cysteinyl-[cysteine desulfurase] + A + AMP + diphosphate + H(+). It participates in tRNA modification. In terms of biological role, catalyzes the ATP-dependent 2-thiolation of cytidine in position 32 of tRNA, to form 2-thiocytidine (s(2)C32). The sulfur atoms are provided by the cysteine/cysteine desulfurase (IscS) system. This is tRNA-cytidine(32) 2-sulfurtransferase from Vibrio vulnificus (strain CMCP6).